The chain runs to 190 residues: RNA pyrophosphohydrolase (190 aa).

In terms of domain architecture, Nudix hydrolase spans 6-149; that stretch reads GYRPNVGIIL…KRDVYTQALN (144 aa). The Nudix box motif lies at 38-59; that stretch reads GGIKYGESPVQAMYRELHEEVG. The tract at residues 167–190 is disordered; the sequence is QRVHGPRSTDSPSSETDGHAHIAG.

This sequence belongs to the Nudix hydrolase family. RppH subfamily. A divalent metal cation is required as a cofactor.

Its function is as follows. Accelerates the degradation of transcripts by removing pyrophosphate from the 5'-end of triphosphorylated RNA, leading to a more labile monophosphorylated state that can stimulate subsequent ribonuclease cleavage. This Bordetella pertussis (strain Tohama I / ATCC BAA-589 / NCTC 13251) protein is RNA pyrophosphohydrolase.